Consider the following 91-residue polypeptide: Cell division topological specificity factor (91 aa).

It belongs to the MinE family.

Functionally, prevents the cell division inhibition by proteins MinC and MinD at internal division sites while permitting inhibition at polar sites. This ensures cell division at the proper site by restricting the formation of a division septum at the midpoint of the long axis of the cell. The protein is Cell division topological specificity factor of Chloroflexus aggregans (strain MD-66 / DSM 9485).